The following is a 236-amino-acid chain: Proteasome subunit beta type-1 (236 aa).

The protein belongs to the peptidase T1B family. The 26S proteasome consists of a 20S proteasome core and two 19S regulatory subunits. The 20S proteasome core is composed of 28 subunits that are arranged in four stacked rings, resulting in a barrel-shaped structure. The two end rings are each formed by seven alpha subunits, and the two central rings are each formed by seven beta subunits. The catalytic chamber with the active sites is on the inside of the barrel.

The protein resides in the cytoplasm. It localises to the nucleus. Functionally, non-catalytic component of the proteasome, a multicatalytic proteinase complex which is characterized by its ability to cleave peptides with Arg, Phe, Tyr, Leu, and Glu adjacent to the leaving group at neutral or slightly basic pH. The proteasome has an ATP-dependent proteolytic activity. In Dictyostelium discoideum (Social amoeba), this protein is Proteasome subunit beta type-1 (psmB1).